The following is a 261-amino-acid chain: MLAKRIIPCLDVHGGRVVKGTNFVNLRDAGDPVELAAVYDKEGADEVVFLDITASSDGRAIMLDVVRRTAEEVFIPFTVGGGLRSVEDIREMLKAGADKISLNTSAVQTPKLISDGAWKFGSQCIVVAIDARRRRDAEGNPVEGWEVYTHGGRKPTGIDVLEWARRVEELGAGEILLTSMDKDGTKDGYDIPLTRAVSEAVTIPVIASGGVGNLDHIVEGLTVGKADAALAASIFHYREYTIGETKEYLRERGVHVRQWRD.

Active-site residues include Asp-11 and Asp-130.

The protein belongs to the HisA/HisF family. As to quaternary structure, heterodimer of HisH and HisF.

The protein localises to the cytoplasm. It carries out the reaction 5-[(5-phospho-1-deoxy-D-ribulos-1-ylimino)methylamino]-1-(5-phospho-beta-D-ribosyl)imidazole-4-carboxamide + L-glutamine = D-erythro-1-(imidazol-4-yl)glycerol 3-phosphate + 5-amino-1-(5-phospho-beta-D-ribosyl)imidazole-4-carboxamide + L-glutamate + H(+). The protein operates within amino-acid biosynthesis; L-histidine biosynthesis; L-histidine from 5-phospho-alpha-D-ribose 1-diphosphate: step 5/9. Its function is as follows. IGPS catalyzes the conversion of PRFAR and glutamine to IGP, AICAR and glutamate. The HisF subunit catalyzes the cyclization activity that produces IGP and AICAR from PRFAR using the ammonia provided by the HisH subunit. The polypeptide is Imidazole glycerol phosphate synthase subunit HisF (Heliobacterium modesticaldum (strain ATCC 51547 / Ice1)).